The chain runs to 513 residues: Calcium-dependent protein kinase 24 (513 aa).

The tract at residues 1-33 (MQPDPSGSGGDGNANAKAKLAPPPVTAAGGRPV) is disordered. The Protein kinase domain occupies 47 to 305 (YRIGKKLGQG…AHEVLCHPWI (259 aa)). Residues 53-61 (LGQGQFGTT) and K76 contribute to the ATP site. D171 serves as the catalytic Proton acceptor. The segment at 311–341 (APDKPIDSAVLSRLKHFSAMNKLKKMALRVI) is autoinhibitory domain. EF-hand domains are found at residues 348–383 (EEIGGLKELFKMIDTDDSGTITFDELKEGLKRVGSE), 384–419 (LTEHEIQALMEAADIDNSGTIDYGEFIAATLHMNKL), 420–455 (EREENLVSAFSFFDKDGSGFITIDELSQACREFGLD), and 458–489 (HLEDMIKDVDQNNDGQIDYSEFTAMMRKGNAG). Residues D361, D363, S365, T367, E372, D397, D399, S401, T403, E408, D433, D435, S437, E444, D467, N469, D471, Q473, and E478 each contribute to the Ca(2+) site.

It belongs to the protein kinase superfamily. Ser/Thr protein kinase family. CDPK subfamily. Expressed in roots.

The protein localises to the cytoplasm. The enzyme catalyses L-seryl-[protein] + ATP = O-phospho-L-seryl-[protein] + ADP + H(+). The catalysed reaction is L-threonyl-[protein] + ATP = O-phospho-L-threonyl-[protein] + ADP + H(+). Its activity is regulated as follows. Activated by calcium. Autophosphorylation may play an important role in the regulation of the kinase activity. Functionally, may play a role in signal transduction pathways that involve calcium as a second messenger. Possesses calcium-dependent protein kinase activity in vitro. The polypeptide is Calcium-dependent protein kinase 24 (Oryza sativa subsp. japonica (Rice)).